The chain runs to 507 residues: Probable cytosol aminopeptidase (507 aa).

K275 and D280 together coordinate Mn(2+). The active site involves K287. Mn(2+)-binding residues include D298, D357, and E359. R361 is an active-site residue.

It belongs to the peptidase M17 family. Requires Mn(2+) as cofactor.

The protein resides in the cytoplasm. The catalysed reaction is Release of an N-terminal amino acid, Xaa-|-Yaa-, in which Xaa is preferably Leu, but may be other amino acids including Pro although not Arg or Lys, and Yaa may be Pro. Amino acid amides and methyl esters are also readily hydrolyzed, but rates on arylamides are exceedingly low.. It catalyses the reaction Release of an N-terminal amino acid, preferentially leucine, but not glutamic or aspartic acids.. Its function is as follows. Presumably involved in the processing and regular turnover of intracellular proteins. Catalyzes the removal of unsubstituted N-terminal amino acids from various peptides. In Rhodopirellula baltica (strain DSM 10527 / NCIMB 13988 / SH1), this protein is Probable cytosol aminopeptidase.